The sequence spans 359 residues: CCAAT/enhancer-binding protein alpha (359 aa).

The interval 1 to 55 is disordered; sequence MESADFYEVEPRPPMSSHLQSPPHAPSNAAFGFPRGAGPAPPPAPPAAPEPLGGI. The segment at 1-70 is required to repress E2F1:TFDP1-mediated transcription, to inhibit cell cycle and to induce adipocyte differentiation; the sequence is MESADFYEVE…SIDISAYIDP (70 aa). Residues 29 to 38 show a composition bias toward low complexity; sequence AAFGFPRGAG. Over residues 39-49 the composition is skewed to pro residues; sequence PAPPPAPPAAP. The tract at residues 54 to 72 is required for interaction with TRIB1; sequence GICEHETSIDISAYIDPAA. A required to induce adipocyte differentiation region spans residues 126–200; sequence PPGYGCAAAG…HASPAHLAAP (75 aa). N6-acetyllysine; alternate is present on lysine 159. A Glycyl lysine isopeptide (Lys-Gly) (interchain with G-Cter in SUMO); alternate cross-link involves residue lysine 159. Lysine 159 is covalently cross-linked (Glycyl lysine isopeptide (Lys-Gly) (interchain with G-Cter in SUMO2); alternate). Disordered regions lie at residues 176–195 and 213–293; these read LFPY…ASPA and TMHL…RERN. Residues 179 to 191 show a composition bias toward pro residues; it reads YQPPPPPPPPHPH. Residues 180-194 form a required to functionally cooperate with SREBF1 in promoter activation region; it reads QPPPPPPPPHPHASP. Serine 193 carries the post-translational modification Phosphoserine. A compositionally biased stretch (pro residues) spans 220 to 232; it reads HPTPPPTPVPSPH. Residues threonine 222 and threonine 226 each carry the phosphothreonine; by GSK3 modification. The residue at position 230 (serine 230) is a Phosphoserine; by GSK3. A compositionally biased stretch (low complexity) spans 233–255; it reads AAPALGAAGLPGPGSALKGLAGA. An interaction with FOXO1 region spans residues 240–359; sequence AGLPGPGSAL…SLVKAMGNCA (120 aa). The segment covering 261-272 has biased composition (gly residues); the sequence is TGGGGGGSGAGA. The span at 277-293 shows a compositional bias: basic and acidic residues; sequence KSVDKNSNEYRVRRERN. One can recognise a bZIP domain in the interval 283–346; the sequence is SNEYRVRRER…DTLRGIFRQL (64 aa). A DNA-binding region spans residues 286 to 301; the sequence is YRVRRERNNIAVRKSR. The segment at 287 to 314 is basic motif; that stretch reads RVRRERNNIAVRKSRDKAKQRNVETQQK. A leucine-zipper region spans residues 318–346; sequence LTSDNDRLRKRVEQLSRELDTLRGIFRQL.

Belongs to the bZIP family. C/EBP subfamily. In terms of assembly, binds DNA as a homodimer and as a heterodimer. Can form stable heterodimers with CEBPB, CEBPD, CEBPE and CEBPG. Interacts with PRDM16. Interacts with UBN1. Interacts with ZNF638; this interaction increases transcriptional activation. Interacts with the complex TFDP2:E2F1; the interaction prevents CEBPA binding to target gene promoters and represses its transcriptional activity. Interacts with RB1. Interacts (when phosphorylated at Ser-193) with CDK2, CDK4, E2F4 and SMARCA2. Interacts with SREBPF1. Interacts with FOXO1 (via the Fork-head domain); the interaction increases when FOXO1 is deacetylated. Interacts with SIX1. Interacts (via recognition sequence) with TRIB1. Interacts (via bZIP domain) with OVOL2 (via zinc-finger domains); the interaction inhibits the transcription factor activity of CEBPA and is required to repress adipogenesis. As to quaternary structure, interacts with TAF1A and UBTF. Interacts with TAF1A and UBTF. Interacts with NPM1. Sumoylated, sumoylation blocks the inhibitory effect on cell proliferation by disrupting the interaction with SMARCA2. Post-translationally, phosphorylation at Ser-193 is required for interaction with CDK2, CDK4 and SWI/SNF complex leading to cell cycle inhibition. Dephosphorylated at Ser-193 by protein phosphatase 2A (PP2A) through PI3K/AKT signaling pathway regulation. Phosphorylation at Thr-222 and Thr-226 by GSK3 is constitutive in adipose tissue and lung. In liver, both Thr-222 and Thr-226 are phosphorylated only during feeding but not during fasting. Phosphorylation of the GSK3 consensus sites selectively decreases transactivation activity on IRE-controlled promoters. In terms of processing, ubiquitinated by COP1 upon interaction with TRIB1. As to expression, isoform 2 and isoform 3 are expressed in adipose tissue and liver (at protein level).

The protein resides in the nucleus. Its subcellular location is the nucleolus. Functionally, transcription factor that coordinates proliferation arrest and the differentiation of myeloid progenitors, adipocytes, hepatocytes, and cells of the lung and the placenta. Binds directly to the consensus DNA sequence 5'-T[TG]NNGNAA[TG]-3' acting as an activator on distinct target genes. During early embryogenesis, plays essential and redundant functions with CEBPB. Essential for the transition from common myeloid progenitors (CMP) to granulocyte/monocyte progenitors (GMP). Critical for the proper development of the liver and the lung. Necessary for terminal adipocyte differentiation, is required for postnatal maintenance of systemic energy homeostasis and lipid storage. To regulate these different processes at the proper moment and tissue, interplays with other transcription factors and modulators. Down-regulates the expression of genes that maintain cells in an undifferentiated and proliferative state through E2F1 repression, which is critical for its ability to induce adipocyte and granulocyte terminal differentiation. Reciprocally E2F1 blocks adipocyte differentiation by binding to specific promoters and repressing CEBPA binding to its target gene promoters. Proliferation arrest also depends on a functional binding to SWI/SNF complex. In liver, regulates gluconeogenesis and lipogenesis through different mechanisms. To regulate gluconeogenesis, functionally cooperates with FOXO1 binding to IRE-controlled promoters and regulating the expression of target genes such as PCK1 or G6PC1. To modulate lipogenesis, interacts and transcriptionally synergizes with SREBF1 in promoter activation of specific lipogenic target genes such as ACAS2. In adipose tissue, seems to act as FOXO1 coactivator accessing to ADIPOQ promoter through FOXO1 binding sites. Can act as dominant-negative. Binds DNA and have transctivation activity, even if much less efficiently than isoform 2. Does not inhibit cell proliferation. Its function is as follows. Directly and specifically enhances ribosomal DNA transcription interacting with RNA polymerase I-specific cofactors and inducing histone acetylation. The polypeptide is CCAAT/enhancer-binding protein alpha (Mus musculus (Mouse)).